We begin with the raw amino-acid sequence, 382 residues long: uncharacterized protein (382 aa).

11 helical membrane passes run 8–28 (VLLL…LNTL), 41–61 (WQVG…TLIA), 73–93 (SYHC…LTVD), 94–114 (FWSW…IWVI), 133–153 (AAYM…LGIV), 157–177 (LLSV…PLLF), 208–228 (GCII…LYLS), 235–255 (ASVG…QWPM), 274–294 (VVIL…ALFI), 325–345 (ALLM…SLLM), and 349–369 (SDNL…MMLL).

The protein belongs to the major facilitator superfamily. YcaD (TC 2.A.1.26) family.

The protein localises to the cell inner membrane. This is an uncharacterized protein from Yersinia pseudotuberculosis serotype IB (strain PB1/+).